Consider the following 695-residue polypeptide: G-patch and R3H domain-containing protein C30B4.02c (695 aa).

Disordered stretches follow at residues 168-200 (SDKE…NDDS), 213-242 (DIAN…EFDI), 257-317 (FADL…FDEG), 332-351 (GNTD…DEDE), 388-448 (DSED…VAAR), and 475-517 (DKSK…DSDN). The span at 182–198 (CYKEQESEKELYSKDND) shows a compositional bias: basic and acidic residues. Composition is skewed to acidic residues over residues 262–286 (VLEE…EEEE), 307–317 (EDSESLEFDEG), and 337–351 (LAED…DEDE). Positions 421 to 434 (KKDRKLPKKMRKAQ) are enriched in basic residues. An R3H domain is found at 525–587 (KIFINDVYQR…KRYTMLSKTH (63 aa)). The G-patch domain maps to 652-695 (KENPGRRLLEKLGWYAGKGLGHPENEGSKDSLRAIVKVSRSGLG).

The protein resides in the cytoplasm. The protein is G-patch and R3H domain-containing protein C30B4.02c of Schizosaccharomyces pombe (strain 972 / ATCC 24843) (Fission yeast).